The sequence spans 237 residues: Ribosomal RNA small subunit methyltransferase G (237 aa).

S-adenosyl-L-methionine contacts are provided by residues Gly78, Phe83, Ala129 to Glu130, and Arg148.

This sequence belongs to the methyltransferase superfamily. RNA methyltransferase RsmG family.

The protein localises to the cytoplasm. Functionally, specifically methylates the N7 position of a guanine in 16S rRNA. The protein is Ribosomal RNA small subunit methyltransferase G of Clostridium kluyveri (strain ATCC 8527 / DSM 555 / NBRC 12016 / NCIMB 10680 / K1).